A 221-amino-acid polypeptide reads, in one-letter code: Germin-like protein 5-1 (221 aa).

Positions 1 to 25 are cleaved as a signal peptide; that stretch reads MARPSLPCAVVAVLLLALLPTPSTA. Cys-35 and Cys-50 are disulfide-bonded. The Cupin type-1 domain maps to 62–210; that stretch reads KGLAAAGNTN…AFQVGTKEVE (149 aa). The N-linked (GlcNAc...) asparagine glycan is linked to Asn-71. Mn(2+) is bound by residues His-110, His-112, Glu-117, and His-156.

Belongs to the germin family. Oligomer (believed to be a pentamer but probably hexamer).

The protein resides in the secreted. It is found in the extracellular space. The protein localises to the apoplast. May play a role in plant defense. Probably has no oxalate oxidase activity even if the active site is conserved. The sequence is that of Germin-like protein 5-1 from Oryza sativa subsp. japonica (Rice).